The chain runs to 362 residues: UDP-N-acetylglucosamine--N-acetylmuramyl-(pentapeptide) pyrophosphoryl-undecaprenol N-acetylglucosamine transferase (362 aa).

UDP-N-acetyl-alpha-D-glucosamine is bound by residues 14–16 (TGG), arginine 170, serine 199, and glutamine 289.

Belongs to the glycosyltransferase 28 family. MurG subfamily.

The protein resides in the cell inner membrane. It carries out the reaction di-trans,octa-cis-undecaprenyl diphospho-N-acetyl-alpha-D-muramoyl-L-alanyl-D-glutamyl-meso-2,6-diaminopimeloyl-D-alanyl-D-alanine + UDP-N-acetyl-alpha-D-glucosamine = di-trans,octa-cis-undecaprenyl diphospho-[N-acetyl-alpha-D-glucosaminyl-(1-&gt;4)]-N-acetyl-alpha-D-muramoyl-L-alanyl-D-glutamyl-meso-2,6-diaminopimeloyl-D-alanyl-D-alanine + UDP + H(+). The protein operates within cell wall biogenesis; peptidoglycan biosynthesis. Cell wall formation. Catalyzes the transfer of a GlcNAc subunit on undecaprenyl-pyrophosphoryl-MurNAc-pentapeptide (lipid intermediate I) to form undecaprenyl-pyrophosphoryl-MurNAc-(pentapeptide)GlcNAc (lipid intermediate II). This Borrelia turicatae (strain 91E135) protein is UDP-N-acetylglucosamine--N-acetylmuramyl-(pentapeptide) pyrophosphoryl-undecaprenol N-acetylglucosamine transferase.